A 1375-amino-acid chain; its full sequence is DNA-directed RNA polymerase subunit beta (1375 aa).

The protein belongs to the RNA polymerase beta chain family. The RNAP catalytic core consists of 2 alpha, 1 beta, 1 beta' and 1 omega subunit. When a sigma factor is associated with the core the holoenzyme is formed, which can initiate transcription.

The catalysed reaction is RNA(n) + a ribonucleoside 5'-triphosphate = RNA(n+1) + diphosphate. In terms of biological role, DNA-dependent RNA polymerase catalyzes the transcription of DNA into RNA using the four ribonucleoside triphosphates as substrates. This chain is DNA-directed RNA polymerase subunit beta, found in Coxiella burnetii (strain RSA 331 / Henzerling II).